The sequence spans 185 residues: Elongation factor P (185 aa).

This sequence belongs to the elongation factor P family.

The protein resides in the cytoplasm. Its pathway is protein biosynthesis; polypeptide chain elongation. Its function is as follows. Involved in peptide bond synthesis. Stimulates efficient translation and peptide-bond synthesis on native or reconstituted 70S ribosomes in vitro. Probably functions indirectly by altering the affinity of the ribosome for aminoacyl-tRNA, thus increasing their reactivity as acceptors for peptidyl transferase. This chain is Elongation factor P, found in Salinispora tropica (strain ATCC BAA-916 / DSM 44818 / JCM 13857 / NBRC 105044 / CNB-440).